Reading from the N-terminus, the 129-residue chain is Histone H2A.J (129 aa).

The tract at residues Met1–Ala22 is disordered. Residues Lys6 and Lys10 each carry the N6-acetyllysine modification. Residues Gln7–Ser19 are compositionally biased toward basic residues. Lys10 carries the post-translational modification N6-lactoyllysine; alternate. Gln105 carries the post-translational modification N5-methylglutamine. Position 121 is a phosphothreonine; by DCAF1 (Thr121).

This sequence belongs to the histone H2A family. The nucleosome is a histone octamer containing two molecules each of H2A, H2B, H3 and H4 assembled in one H3-H4 heterotetramer and two H2A-H2B heterodimers. The octamer wraps approximately 147 bp of DNA. In terms of processing, glutamine methylation at Gln-105 (H2AQ104me) by FBL is specifically dedicated to polymerase I. It is present at 35S ribosomal DNA locus and impairs binding of the FACT complex. Monoubiquitination of Lys-120 (H2AXK119ub) gives a specific tag for epigenetic transcriptional repression. Following DNA double-strand breaks (DSBs), it is ubiquitinated through 'Lys-63' linkage of ubiquitin moieties. Post-translationally, phosphorylation on Ser-2 (H2AS1ph) is enhanced during mitosis. Phosphorylation on Ser-2 by RPS6KA5/MSK1 directly represses transcription. Acetylation of H3 inhibits Ser-2 phosphorylation by RPS6KA5/MSK1. Phosphorylation at Thr-121 (H2AT120ph) by DCAF1 is present in the regulatory region of many tumor suppresor genes and down-regulates their transcription.

It localises to the nucleus. The protein localises to the chromosome. In terms of biological role, core component of nucleosome. Nucleosomes wrap and compact DNA into chromatin, limiting DNA accessibility to the cellular machineries which require DNA as a template. Histones thereby play a central role in transcription regulation, DNA repair, DNA replication and chromosomal stability. DNA accessibility is regulated via a complex set of post-translational modifications of histones, also called histone code, and nucleosome remodeling. This chain is Histone H2A.J, found in Bos taurus (Bovine).